A 399-amino-acid chain; its full sequence is uncharacterized protein (399 aa).

8 WD repeats span residues 59–99, 102–141, 144–185, 187–227, 241–280, 283–322, 324–363, and 366–399; these read EHKD…QICQ, GHKD…EFIT, ETVD…QVMY, HTAP…PECR, ETAA…ILAS, AQTE…FRKS, PHEQ…LLGE, and GHQE…DCEH.

It is found in the cytoplasm. The protein resides in the nucleus. This is an uncharacterized protein from Schizosaccharomyces pombe (strain 972 / ATCC 24843) (Fission yeast).